We begin with the raw amino-acid sequence, 629 residues long: Protein EDS1B (629 aa).

The active-site Nucleophile is the Ser123. Residues Asp187 and His317 each act as charge relay system in the active site.

Interacts (via N-terminus) with PAD4 and SAG101. Part of a nuclear complex made of EDS1, PAD4 and SAG101, that can be redirected to the cytoplasm in the presence of an extranuclear form of EDS1. Does not interact with itself or with EDS1.

The protein resides in the nucleus. It is found in the cytoplasm. Functionally, acts as a second functional copy of EDS1. Can mediate HRT-mediated resistance to turnip crinkle virus. This is Protein EDS1B (EDS1B) from Arabidopsis thaliana (Mouse-ear cress).